We begin with the raw amino-acid sequence, 154 residues long: MIEINIYYRKWYNIINKPKSFIKKIINTSLIDLNIYEYKPTISVVLANNRLLQKLNYEYRKKNKPTNVLSFPYNKLNKYCYLGEIFVSLDTLINESTDLNIPIEHHTSHMLIHGLLHILDYNHEEPLEQYIMESIEIKLLDKLGIKNPYVPRET.

Zn(2+) is bound by residues histidine 113, histidine 117, and histidine 123.

The protein belongs to the endoribonuclease YbeY family. Requires Zn(2+) as cofactor.

It is found in the cytoplasm. Its function is as follows. Single strand-specific metallo-endoribonuclease involved in late-stage 70S ribosome quality control and in maturation of the 3' terminus of the 16S rRNA. This chain is Endoribonuclease YbeY, found in Ehrlichia chaffeensis (strain ATCC CRL-10679 / Arkansas).